The chain runs to 346 residues: uncharacterized protein (346 aa).

This is an uncharacterized protein from Borreliella burgdorferi (strain ATCC 35210 / DSM 4680 / CIP 102532 / B31) (Borrelia burgdorferi).